A 154-amino-acid chain; its full sequence is Protein X (154 aa).

The segment at 68–117 (PCALRFTSARRMETTVNANQVLPKVLHKRTLGLSALSTTDLEAYFKDCVF) is mitochondrial targeting sequence.

This sequence belongs to the orthohepadnavirus protein X family. In terms of assembly, may form homodimer. May interact with host CEBPA, CFLAR, CREB1, DDB1, E4F1, HBXIP, HSPD1/HSP60, NFKBIA, POLR2E and SMAD4. Interacts with host SMC5-SMC6 complex and induces its degradation. Interacts with host TRPC4AP; leading to prevent ubiquitination of TRPC4AP. Interacts with host PLSCR1; this interaction promotes ubiquitination and degradation of HBx and impairs HBx-mediated cell proliferation. In terms of processing, a fraction may be phosphorylated in insect cells and HepG2 cells, a human hepatoblastoma cell line. Phosphorylated in vitro by host protein kinase C or mitogen-activated protein kinase. N-acetylated in insect cells.

The protein localises to the host cytoplasm. It localises to the host nucleus. Its subcellular location is the host mitochondrion. Multifunctional protein that plays a role in silencing host antiviral defenses and promoting viral transcription. Does not seem to be essential for HBV infection. May be directly involved in development of cirrhosis and liver cancer (hepatocellular carcinoma). Most of cytosolic activities involve modulation of cytosolic calcium. The effect on apoptosis is controversial depending on the cell types in which the studies have been conducted. May induce apoptosis by localizing in mitochondria and causing loss of mitochondrial membrane potential. May also modulate apoptosis by binding host CFLAR, a key regulator of the death-inducing signaling complex (DISC). Promotes viral transcription by using the host E3 ubiquitin ligase DDB1 to target the SMC5-SMC6 complex to proteasomal degradation. This host complex would otherwise bind to viral episomal DNA, and prevents its transcription. Moderately stimulates transcription of many different viral and cellular transcription elements. Promoters and enhancers stimulated by HBx contain DNA binding sites for NF-kappa-B, AP-1, AP-2, c-EBP, ATF/CREB, or the calcium-activated factor NF-AT. The protein is Protein X of Homo sapiens (Human).